A 921-amino-acid polypeptide reads, in one-letter code: Inner nuclear membrane protein Man1 (921 aa).

The LEM domain maps to 7 to 51 (AAAPQQLSDEELFSQLRRYGLSPGPVTESTRPVYLKKLKKLREEE). Ser28 carries the post-translational modification Phosphoserine. 3 disordered regions span residues 47–97 (LREE…AYLR), 136–357 (SSDE…GGCG), and 374–395 (LAPL…PTGP). 2 stretches are compositionally biased toward low complexity: residues 53–62 (QQQQQQQQQQ) and 72–85 (TRNS…TAMG). A phosphoserine mark is found at Ser136, Ser137, and Ser140. Positions 217-237 (AAEDADEELADGEDRDPEAEE) are enriched in acidic residues. A phosphoserine mark is found at Ser261, Ser263, and Ser287. Residues 263 to 275 (SEEEEEEGEEDGD) are compositionally biased toward acidic residues. Residues 308-317 (SGGSRQETSV) show a composition bias toward polar residues. Gly residues predominate over residues 348-357 (PGGGGGGGCG). Phosphoserine is present on Ser412. 2 consecutive transmembrane segments (helical) span residues 486-506 (MFLL…YLGM) and 637-657 (AFIT…LVCV). The interval 709–921 (VRDSLIQPQD…TGLANSQGSS (213 aa)) is interaction with SMAD1, SMAD2, SMAD3 and SMAD5. Residues 717–736 (QDRKKMKKVWDRAVDFLAAN) mediate DNA binding. A Phosphoserine modification is found at Ser787. Residue Thr893 is modified to Phosphothreonine. Ser921 carries the phosphoserine modification.

Interacts with SMAD1, SMAD2, SMAD3 and SMAD5. Binds to both phosphorylated and unphosphorylated R-SMADS.

Its subcellular location is the nucleus inner membrane. Can function as a specific repressor of TGF-beta, activin, and BMP signaling through its interaction with the R-SMAD proteins. Antagonizes TGF-beta-induced cell proliferation arrest. This is Inner nuclear membrane protein Man1 (Lemd3) from Mus musculus (Mouse).